A 179-amino-acid polypeptide reads, in one-letter code: Segregation and condensation protein B (179 aa).

It belongs to the ScpB family. As to quaternary structure, homodimer. Homodimerization may be required to stabilize the binding of ScpA to the Smc head domains. Component of a cohesin-like complex composed of ScpA, ScpB and the Smc homodimer, in which ScpA and ScpB bind to the head domain of Smc. The presence of the three proteins is required for the association of the complex with DNA.

It is found in the cytoplasm. Functionally, participates in chromosomal partition during cell division. May act via the formation of a condensin-like complex containing Smc and ScpA that pull DNA away from mid-cell into both cell halves. In Streptococcus equi subsp. equi (strain 4047), this protein is Segregation and condensation protein B.